Here is a 188-residue protein sequence, read N- to C-terminus: NAD(P)H-quinone oxidoreductase subunit J (188 aa).

It belongs to the complex I 30 kDa subunit family. As to quaternary structure, NDH-1 can be composed of about 15 different subunits; different subcomplexes with different compositions have been identified which probably have different functions.

It is found in the cellular thylakoid membrane. It carries out the reaction a plastoquinone + NADH + (n+1) H(+)(in) = a plastoquinol + NAD(+) + n H(+)(out). The enzyme catalyses a plastoquinone + NADPH + (n+1) H(+)(in) = a plastoquinol + NADP(+) + n H(+)(out). In terms of biological role, NDH-1 shuttles electrons from an unknown electron donor, via FMN and iron-sulfur (Fe-S) centers, to quinones in the respiratory and/or the photosynthetic chain. The immediate electron acceptor for the enzyme in this species is believed to be plastoquinone. Couples the redox reaction to proton translocation, and thus conserves the redox energy in a proton gradient. Cyanobacterial NDH-1 also plays a role in inorganic carbon-concentration. The polypeptide is NAD(P)H-quinone oxidoreductase subunit J (Parasynechococcus marenigrum (strain WH8102)).